Consider the following 273-residue polypeptide: Large ribosomal subunit protein uL2 (273 aa).

The interval 228 to 273 is disordered; it reads VDHPHGGGEGKTSGGRHPVTPWGFPTKGKKTRKNKRTSKFIIKKRK. A compositionally biased stretch (basic residues) spans 254–273; that stretch reads KGKKTRKNKRTSKFIIKKRK.

The protein belongs to the universal ribosomal protein uL2 family. Part of the 50S ribosomal subunit. Forms a bridge to the 30S subunit in the 70S ribosome.

Functionally, one of the primary rRNA binding proteins. Required for association of the 30S and 50S subunits to form the 70S ribosome, for tRNA binding and peptide bond formation. It has been suggested to have peptidyltransferase activity; this is somewhat controversial. Makes several contacts with the 16S rRNA in the 70S ribosome. In Rickettsia bellii (strain OSU 85-389), this protein is Large ribosomal subunit protein uL2.